Here is a 559-residue protein sequence, read N- to C-terminus: MSQASSSPGEGPSSEAAAISEAEAASGSFGRLHCQVLRLITNVEGGSLEAGRLRLLDLRTNIEVSRPSVLCCFQENKSPHDTVDLTDLNIKGRCVVGEQDRLLVDLNNFGPRRLTPGSENNTVSVLAFALPLDRVPVSGLHLFQSQRRGGEENRPRMEARAIIRRTAHHWAVRLTVTPNWRRRTDSSLEAGQIFVSQFAFRAGAIPLTLVDALEQLACSDPNTYIHKTETDERGQWIMLFLHHDSPHPPTSVFLHFSVYTHRAEVVARHNPYPHLRRLPDNGFQLLIPKSFTLTRIHPEYIVQIQNAFETNQTHDTIFFPENIPGVSIEAGPLPDRVRITLRVTLTGDQAVHLEHRQPLGRIHFFRRGFWTLTPGKPDKIKRPQVQLRAGLFPRSNVMRGAVSEFLPQSPGLPPTEEEEEEEEEDDEDDLSSTPTPTPLSEAMFAGFEEASGDEDSDTQAGLSRALILTGQRRRSGNNGALTLVIPSWHVFASLDDLVPLTVSVQHAALRPTSYLRSDMDGDVRTAADISSTLRSVPAPRPSPISTASTSSTPRSRPRI.

An S-nitrosocysteine; by host modification is found at Cys218. Position 223 is a phosphothreonine (Thr223). Disordered stretches follow at residues 404-440 and 530-559; these read EFLPQSPGLPPTEEEEEEEEEDDEDDLSSTPTPTPLS and SSTLRSVPAPRPSPISTASTSSTPRSRPRI. The segment covering 415–430 has biased composition (acidic residues); it reads TEEEEEEEEEDDEDDL. Composition is skewed to low complexity over residues 431–440 and 543–559; these read SSTPTPTPLS and PISTASTSSTPRSRPRI.

This sequence belongs to the herpesviridae pp71 family. In terms of assembly, interacts with the host protein DAXX; this interaction takes place at ND10 and induces the reversal of DAXX-mediated repression of viral transcription. Interacts with UL35. Interacts with host TMEM173/STING1; this interaction inhibits the cGAS/STING pathway. Interacts with host RB1; this interaction mediates RB1 proteasomal degradation. Post-translationally, S-nitrosylation limits ability to undermine the cGAS/STING antiviral pathway.

It localises to the virion tegument. The protein resides in the host nucleus. Its subcellular location is the host endoplasmic reticulum. Stimulates viral immediate-early (IE) transcription. Plays a role in the inhibition of the host innate repsonse by targeting STING1 and thus the cGAS-STING pathway. Also counteracts host DAXX-mediated repression of viral transcription. Displaces a DAXX-binding protein, ATRX, from nuclear domain 10 sites (ND10) shortly after infection. Increases the basal level of SUMOylated DAXX in infected cells. Stimulates quiescent cells to re-enter the cell cycle, proceed through G1 and enter the S phase. Interacts with hypophosphorylated forms of RB1 and induces their degradation by the proteasome without involving ubiquitin conjugation. This Homo sapiens (Human) protein is Protein pp71 (UL82).